A 939-amino-acid polypeptide reads, in one-letter code: Progesterone receptor (939 aa).

Basic and acidic residues predominate over residues 1-11 (MTERTGKDARA). Positions 1–174 (MTERTGKDAR…RSSQGAACPL (174 aa)) are AF3; mediates transcriptional activation (in isoform B). The tract at residues 1 to 302 (MTERTGKDAR…AEQDAPAPGC (302 aa)) is disordered. The interval 1–572 (MTERTGKDAR…YSFESLPQKI (572 aa)) is modulating, Ala/Pro-rich. A Glycyl lysine isopeptide (Lys-Gly) (interchain with G-Cter in SUMO) cross-link involves residue lysine 7. Over residues 15–26 (AGGAPSPAPAAE) the composition is skewed to low complexity. Position 20 is a phosphoserine (serine 20). A compositionally biased stretch (basic and acidic residues) spans 27–36 (PESRRRDGGR). A compositionally biased stretch (low complexity) spans 49–67 (AAAAAAAAAAASAAPSAPS). Serine 141 carries the phosphoserine modification. Residues 175–314 (MSRPEGKAGD…LATTMMDFIH (140 aa)) are mediates transcriptional transrepression (in isoform A). A Nuclear localization signal motif is present at residues 193-197 (KGPPR). Residue serine 200 is modified to Phosphoserine. 2 stretches are compositionally biased toward low complexity: residues 211-230 (GAHA…AALG) and 257-278 (PAAA…TAPV). Residue serine 303 is modified to Phosphoserine; by MAPK1. Serine 349 carries the phosphoserine; by MAPK modification. Lysine 392 is covalently cross-linked (Glycyl lysine isopeptide (Lys-Gly) (interchain with G-Cter in SUMO); alternate). Lysine 392 participates in a covalent cross-link: Glycyl lysine isopeptide (Lys-Gly) (interchain with G-Cter in ubiquitin); alternate. Position 404 is a phosphoserine; by CDK2 (serine 404). The tract at residues 463 to 552 (PALECVLYKA…VYQPYLNYLR (90 aa)) is AF1; mediates transcriptional activation. Lysine 537 participates in a covalent cross-link: Glycyl lysine isopeptide (Lys-Gly) (interchain with G-Cter in SUMO). 2 NR C4-type zinc fingers span residues 573–593 (CLIC…CGSC) and 609–633 (CAGR…LRKC). Positions 573 to 645 (CLICGDEASG…AGMVLGGRKF (73 aa)) form a DNA-binding region, nuclear receptor. Serine 682 carries the post-translational modification Phosphoserine. An NR LBD domain is found at 685–919 (QDIQLIPPLI…EFPEMMSEVI (235 aa)). Residues 693 to 939 (LINLLMSIEP…MVKPLLFHKK (247 aa)) are AF2; mediates transcriptional activation.

It belongs to the nuclear hormone receptor family. NR3 subfamily. As to quaternary structure, interacts with SMARD1 and UNC45A. Interacts with CUEDC2; the interaction promotes ubiquitination, decreases sumoylation, and represses transcriptional activity. Interacts with PIAS3; the interaction promotes sumoylation of PR in a hormone-dependent manner, inhibits DNA-binding, and alters nuclear export. Interacts with SP1; the interaction requires ligand-induced phosphorylation on Ser-349 by ERK1/2-MAPK. Interacts with PRMT2. Isoform A interacts with NCOR2. Isoform B (but not isoform A) interacts with NCOA2 and NCOA1. Isoform B (but not isoform A) interacts with KLF9. Interacts with GTF2B. In terms of processing, phosphorylated on multiple serine sites. Several of these sites are hormone-dependent. Phosphorylation on Ser-303 occurs preferentially on isoform B, is highly hormone-dependent and modulates ubiquitination and sumoylation on Lys-392. Phosphorylation on Ser-303 and Ser-349 also requires induction by hormone. Basal phosphorylation on Ser-200 and Ser-404 is increased in response to progesterone and can be phosphorylated in vitro by the CDK2-A1 complex. Increased levels of phosphorylation on Ser-404 also in the presence of EGF, heregulin, IGF, PMA and FBS. Phosphorylation at this site by CDK2 is ligand-independent, and increases nuclear translocation and transcriptional activity. Phosphorylation at Ser-303, but not at Ser-200, is impaired during the G(2)/M phase of the cell cycle. Phosphorylation on Ser-349 by ERK1/2 MAPK is required for interaction with SP1. Post-translationally, sumoylation is hormone-dependent and represses transcriptional activity. Sumoylation on all three sites is enhanced by PIAS3. Desumoylated by SENP1. Sumoylation on Lys-392, the main site of sumoylation, is repressed by ubiquitination on the same site, and modulated by phosphorylation at Ser-303. Ubiquitination is hormone-dependent and represses sumoylation on the same site. Promoted by MAPK-mediated phosphorylation on Ser-303. In terms of processing, palmitoylated by ZDHHC7 and ZDHHC21. Palmitoylation is required for plasma membrane targeting and for rapid intracellular signaling via ERK and AKT kinases and cAMP generation. Expressed in mammary gland and uterus.

Its subcellular location is the nucleus. It is found in the cytoplasm. In terms of biological role, the steroid hormones and their receptors are involved in the regulation of eukaryotic gene expression and affect cellular proliferation and differentiation in target tissues. Depending on the isoform, progesterone receptor functions as a transcriptional activator or repressor. Functionally, ligand-dependent transdominant repressor of steroid hormone receptor transcriptional activity including repression of its isoform B, MR and ER. Transrepressional activity may involve recruitment of corepressor NCOR2. Its function is as follows. Transcriptional activator of several progesteron-dependent promoters in a variety of cell types. Involved in activation of SRC-dependent MAPK signaling on hormone stimulation. The sequence is that of Progesterone receptor (PGR) from Canis lupus familiaris (Dog).